Consider the following 569-residue polypeptide: Urease subunit alpha (569 aa).

In terms of domain architecture, Urease spans 131–569; the sequence is GSIDTHIHFI…VPMAQRYFLL (439 aa). Positions 136, 138, and 219 each coordinate Ni(2+). N6-carboxylysine is present on Lys-219. His-221 provides a ligand contact to substrate. Residues His-248 and His-274 each coordinate Ni(2+). The active-site Proton donor is the His-322. Asp-362 serves as a coordination point for Ni(2+).

The protein belongs to the metallo-dependent hydrolases superfamily. Urease alpha subunit family. As to quaternary structure, heterotrimer of UreA (gamma), UreB (beta) and UreC (alpha) subunits. Three heterotrimers associate to form the active enzyme. Requires Ni cation as cofactor. In terms of processing, carboxylation allows a single lysine to coordinate two nickel ions.

It localises to the cytoplasm. It carries out the reaction urea + 2 H2O + H(+) = hydrogencarbonate + 2 NH4(+). The protein operates within nitrogen metabolism; urea degradation; CO(2) and NH(3) from urea (urease route): step 1/1. The polypeptide is Urease subunit alpha (Prochlorococcus marinus (strain AS9601)).